The chain runs to 500 residues: Glycerol kinase (500 aa).

Residue Thr-11 participates in ADP binding. Residues Thr-11, Thr-12, and Ser-13 each contribute to the ATP site. Thr-11 provides a ligand contact to sn-glycerol 3-phosphate. Arg-15 lines the ADP pocket. Sn-glycerol 3-phosphate is bound by residues Arg-81, Glu-82, Tyr-133, and Asp-242. Residues Arg-81, Glu-82, Tyr-133, Asp-242, and Gln-243 each coordinate glycerol. Positions 264 and 307 each coordinate ADP. ATP-binding residues include Thr-264, Gly-307, Gln-311, and Gly-411. Residue Gly-411 participates in ADP binding.

This sequence belongs to the FGGY kinase family.

It carries out the reaction glycerol + ATP = sn-glycerol 3-phosphate + ADP + H(+). It participates in polyol metabolism; glycerol degradation via glycerol kinase pathway; sn-glycerol 3-phosphate from glycerol: step 1/1. Inhibited by fructose 1,6-bisphosphate (FBP). In terms of biological role, key enzyme in the regulation of glycerol uptake and metabolism. Catalyzes the phosphorylation of glycerol to yield sn-glycerol 3-phosphate. This is Glycerol kinase from Rhodopseudomonas palustris (strain BisA53).